We begin with the raw amino-acid sequence, 1175 residues long: 1-phosphatidylinositol 4,5-bisphosphate phosphodiesterase beta-4 (1175 aa).

An N-acetylalanine modification is found at Ala2. A PI-PLC X-box domain is found at 313–463 (QEMDHPLAHY…LKRKILIKNK (151 aa)). Residues His328 and His375 contribute to the active site. Positions 482–511 (EAGESASPANILEDDNEEEIESADQEEEAH) are disordered. Residues 493 to 508 (LEDDNEEEIESADQEE) are compositionally biased toward acidic residues. Residues 565–681 (LSTMINYAQP…GYLLKPDFMR (117 aa)) form the PI-PLC Y-box domain. One can recognise a C2 domain in the interval 684-809 (DRTFDPFSET…SLRNEGNKPL (126 aa)). Disordered stretches follow at residues 863–895 (ADVP…ELRP) and 1082–1110 (KISM…VREL). Composition is skewed to polar residues over residues 881 to 895 (AKAN…ELRP) and 1085 to 1094 (MENSKAISQD). Thr886 carries the phosphothreonine modification. The segment covering 1095 to 1109 (KSIKNKAERERRVRE) has biased composition (basic and acidic residues).

The cofactor is Ca(2+). In terms of tissue distribution, preferentially expressed in the retina.

It localises to the cell membrane. It carries out the reaction a 1,2-diacyl-sn-glycero-3-phospho-(1D-myo-inositol-4,5-bisphosphate) + H2O = 1D-myo-inositol 1,4,5-trisphosphate + a 1,2-diacyl-sn-glycerol + H(+). The catalysed reaction is a 1,2-diacyl-sn-glycero-3-phospho-(1D-myo-inositol) + H2O = 1D-myo-inositol 1-phosphate + a 1,2-diacyl-sn-glycerol + H(+). In terms of biological role, activated phosphatidylinositol-specific phospholipase C enzymes catalyze the production of the second messenger molecules diacylglycerol (DAG) and inositol 1,4,5-trisphosphate (IP3) involved in G-protein coupled receptor signaling pathways. PLCB4 is a direct effector of the endothelin receptor signaling pathway that plays an essential role in lower jaw and middle ear structures development. In Homo sapiens (Human), this protein is 1-phosphatidylinositol 4,5-bisphosphate phosphodiesterase beta-4.